A 105-amino-acid polypeptide reads, in one-letter code: MFAVIKAGGKQYKVDRNSIIKVEKIDGELGSKIQFDQVLMIGEYSKPSFIGTPIVKGAVVTAEITNQLKDNKIIVFKKKRRKNYRRKAGHRQELTELKILDITKQ.

The protein belongs to the bacterial ribosomal protein bL21 family. As to quaternary structure, part of the 50S ribosomal subunit. Contacts protein L20.

In terms of biological role, this protein binds to 23S rRNA in the presence of protein L20. The chain is Large ribosomal subunit protein bL21 from Rickettsia peacockii (strain Rustic).